A 99-amino-acid polypeptide reads, in one-letter code: MMMNSFFPAMALMVLVGCSTPSPVQKAQRVKVDPLRSLNMEALCKDQAAKRYNTGEQKIDVTAFEQFQGSYEMRGYTFRKEQFVCSFDADGHFLHLSMR.

The N-terminal stretch at 1 to 17 is a signal peptide; the sequence is MMMNSFFPAMALMVLVG. A lipid anchor (N-palmitoyl cysteine) is attached at Cys18. Cys18 is lipidated: S-diacylglycerol cysteine.

It is found in the cell membrane. This is an uncharacterized protein from Escherichia coli O157:H7.